A 395-amino-acid chain; its full sequence is N5-carboxyaminoimidazole ribonucleotide synthase (395 aa).

ATP contacts are provided by residues K109, K149, 184 to 187 (EEFI), E192, and 268 to 269 (NE). Positions 113–298 (RQLLTRLGLP…QFEQQLRAIA (186 aa)) constitute an ATP-grasp domain.

This sequence belongs to the PurK/PurT family. As to quaternary structure, homodimer.

The enzyme catalyses 5-amino-1-(5-phospho-beta-D-ribosyl)imidazole + hydrogencarbonate + ATP = 5-carboxyamino-1-(5-phospho-D-ribosyl)imidazole + ADP + phosphate + 2 H(+). Its pathway is purine metabolism; IMP biosynthesis via de novo pathway; 5-amino-1-(5-phospho-D-ribosyl)imidazole-4-carboxylate from 5-amino-1-(5-phospho-D-ribosyl)imidazole (N5-CAIR route): step 1/2. Functionally, catalyzes the ATP-dependent conversion of 5-aminoimidazole ribonucleotide (AIR) and HCO(3)(-) to N5-carboxyaminoimidazole ribonucleotide (N5-CAIR). The sequence is that of N5-carboxyaminoimidazole ribonucleotide synthase from Synechococcus elongatus (strain ATCC 33912 / PCC 7942 / FACHB-805) (Anacystis nidulans R2).